The primary structure comprises 779 residues: Mesenchyme-specific cell surface glycoprotein (779 aa).

The N-terminal stretch at 1 to 15 (MQFGVPLLVLCLALG) is a signal peptide. 2 N-linked (GlcNAc...) asparagine glycosylation sites follow: N203 and N234. The segment at 249 to 363 (AGFPRGTTWS…QYPMIPTTPL (115 aa)) is disordered. The segment covering 262–351 (GAGGQGGQGQ…GGQGGQGGGN (90 aa)) has biased composition (gly residues). N-linked (GlcNAc...) asparagine glycosylation is found at N369, N451, and N609.

Restricted to the primary mesenchyme cell lineage.

It is found in the cell membrane. Functionally, not known. Could be involved in mesenchyme cell migration, adhesion, fusion, or spicule formation. This chain is Mesenchyme-specific cell surface glycoprotein, found in Strongylocentrotus purpuratus (Purple sea urchin).